Here is a 930-residue protein sequence, read N- to C-terminus: Isoleucine--tRNA ligase (930 aa).

Residues 57-67 carry the 'HIGH' region motif; the sequence is PYANGNIHVGH. Position 554 (Glu554) interacts with L-isoleucyl-5'-AMP. Positions 595–599 match the 'KMSKS' region motif; sequence KMSKS. Lys598 is a binding site for ATP. The Zn(2+) site is built by Cys888, Cys891, Cys908, and Cys911.

The protein belongs to the class-I aminoacyl-tRNA synthetase family. IleS type 1 subfamily. As to quaternary structure, monomer. Zn(2+) serves as cofactor.

Its subcellular location is the cytoplasm. It carries out the reaction tRNA(Ile) + L-isoleucine + ATP = L-isoleucyl-tRNA(Ile) + AMP + diphosphate. Catalyzes the attachment of isoleucine to tRNA(Ile). As IleRS can inadvertently accommodate and process structurally similar amino acids such as valine, to avoid such errors it has two additional distinct tRNA(Ile)-dependent editing activities. One activity is designated as 'pretransfer' editing and involves the hydrolysis of activated Val-AMP. The other activity is designated 'posttransfer' editing and involves deacylation of mischarged Val-tRNA(Ile). This chain is Isoleucine--tRNA ligase, found in Streptococcus pneumoniae (strain CGSP14).